Consider the following 359-residue polypeptide: 4-galactosyl-N-acetylglucosaminide 3-alpha-L-fucosyltransferase FUT6 (359 aa).

Residues 1 to 14 (MDPLGPAKPQWSWR) lie on the Cytoplasmic side of the membrane. A helical; Signal-anchor for type II membrane protein transmembrane segment spans residues 15–34 (CCLTTLLFQLLMAVCFFSYL). The Lumenal segment spans residues 35 to 359 (RVSQDDPTVY…QTRGIAAWFT (325 aa)). Asn46, Asn91, Asn153, and Asn184 each carry an N-linked (GlcNAc...) asparagine glycan. Residues 73-112 (KPIALPRCSEMVPGTADCNITADRKVYPQADAVIVHHREV) are determines site-specific fucosylation.

Belongs to the glycosyltransferase 10 family. Homodimer and monomer. Monomer (secreted form). N-glycosylated. Post-translationally, proteolytic cleavage releases a secreted glycoform of 43 kDa. In terms of tissue distribution, kidney, liver, colon, small intestine, bladder, uterus and salivary gland.

It localises to the golgi apparatus. Its subcellular location is the golgi stack membrane. It is found in the secreted. The enzyme catalyses a beta-D-galactosyl-(1-&gt;4)-N-acetyl-beta-D-glucosaminyl derivative + GDP-beta-L-fucose = a beta-D-galactosyl-(1-&gt;4)-[alpha-L-fucosyl-(1-&gt;3)]-N-acetyl-beta-D-glucosaminyl derivative + GDP + H(+). It catalyses the reaction an N-acetyl-alpha-neuraminyl-(2-&gt;3)-beta-D-galactosyl-(1-&gt;4)-N-acetyl-beta-D-glucosaminyl derivative + GDP-beta-L-fucose = an alpha-Neu5Ac-(2-&gt;3)-beta-D-Gal-(1-&gt;4)-[alpha-L-Fuc-(1-&gt;3)]-beta-D-GlcNAc derivative + GDP + H(+). The catalysed reaction is an alpha-Neu5Ac-(2-&gt;3)-beta-D-Gal-(1-&gt;4)-beta-D-GlcNAc-(1-&gt;3)-beta-D-Gal-(1-&gt;4)-[alpha-L-Fuc-(1-&gt;3)]-beta-D-GlcNAc derivative + GDP-beta-L-fucose = an alpha-Neu5Ac-(2-&gt;3)-beta-D-Gal-(1-&gt;4)-[alpha-L-Fuc-(1-&gt;3)]-beta-D-GlcNAc-(1-&gt;3)-beta-D-Gal-(1-&gt;4)-[alpha-L-Fuc-(1-&gt;3)]-beta-D-GlcNAc derivative + GDP + H(+). It carries out the reaction a neolactoside nLc6Cer + GDP-beta-L-fucose = beta-D-Gal-(1-&gt;4)-[alpha-L-Fuc-(1-&gt;3)]-beta-D-GlcNAc-(1-&gt;3)-beta-D-Gal-(1-&gt;4)-beta-D-GlcNAc-(1-&gt;3)-beta-D-Gal-(1-&gt;4)-beta-D-Glc-(1&lt;-&gt;1')-Cer + GDP + H(+). The enzyme catalyses a neolactoside nLc6Cer + GDP-beta-L-fucose = beta-D-galactosyl-(1-&gt;4)-N-acetyl-beta-D-glucosaminyl-(1-&gt;3)-beta-D-galactosyl-(1-&gt;4)-[alpha-L-fucosyl-(1-&gt;3)]-N-acetyl-beta-D-glucosaminyl-(1-&gt;3)-beta-D-galactosyl-(1-&gt;4)-beta-D-glucosyl-(1&lt;-&gt;1')-ceramide + GDP + H(+). It catalyses the reaction a neolactoside VI(3)-alpha-NeuNAc-nLc6Cer + GDP-beta-L-fucose = a neolactoside VI(3)-alpha-NeuAc,V(3)-alphaFuc-nLc6Cer + GDP + H(+). The catalysed reaction is beta-D-galactosyl-(1-&gt;4)-N-acetyl-D-glucosamine + GDP-beta-L-fucose = beta-D-galactosyl-(1-&gt;4)-[alpha-L-fucosyl-(1-&gt;3)]-N-acetyl-D-glucosamine + GDP + H(+). It carries out the reaction N-acetyl-alpha-neuraminosyl-(2-&gt;3)-beta-D-galactosyl-(1-&gt;4)-N-acetyl-beta-D-glucosamine + GDP-beta-L-fucose = N-acetyl-alpha-neuraminosyl-(2-&gt;3)-beta-D-galactosyl-(1-&gt;4)-[alpha-L-fucosyl-(1-&gt;3)]-N-acetyl-beta-D-glucosamine + GDP + H(+). The enzyme catalyses lactose + GDP-beta-L-fucose = beta-D-galactosyl-(1-&gt;4)-[alpha-L-fucosyl-(1-&gt;3)]-D-glucose + GDP + H(+). It catalyses the reaction alpha-L-Fuc-(1-&gt;2)-beta-D-Gal-(1-&gt;4)-D-Glc + GDP-beta-L-fucose = alpha-L-Fuc-(1-&gt;2)-beta-D-Gal-(1-&gt;4)-[alpha-L-Fuc-(1-&gt;3)]-D-Glc + GDP + H(+). The catalysed reaction is a beta-D-galactosyl-(1-&gt;4)-N-acetyl-beta-D-6-sulfooxy-glucosaminyl derivative + GDP-beta-L-fucose = a beta-D-galactosyl-(1-&gt;4)-[alpha-L-fucosyl-(1-&gt;3)]-N-acetyl-beta-D-6-sulfooxy-glucosaminyl derivative + GDP + H(+). Its pathway is protein modification; protein glycosylation. In terms of biological role, catalyzes the transfer of L-fucose, from a guanosine diphosphate-beta-L-fucose, to the N-acetyl glucosamine (GlcNAc) of a distal alpha2,3 sialylated lactosamine unit of a glycoprotein- or a glycolipid-linked sialopolylactosamines chain or of a distal or internal lactosamine unit of a neutral glycoprotein- or a glycolipid-linked polylactosamines chain through an alpha-1,3 glycosidic linkage and participates in surface expression of the sialyl Lewis X (sLe(x)), Lewis X (Le(x)) and non sialylated VIM2 determinants. Moreover transfers fucose to H-type 2 (Fucalpha1-2Galbeta1-4GlcNAc) chain acceptor substrates and participates in difucosylated sialyl Lewis x determinants. Also fucosylates a polylactosamine substrate having a 6 sulfate modification at the GlcNAc moiety and gives rise to sialyl and non-sialyl 6-sulfo lewis X. Does not have activity towards type 1 ((Galbeta1-3GlcNAc)) and H-type 1 chain (Fucalpha1-2Galbeta1-3GlcNAc) acceptors substrates. Does not have alpha(1,3)-fucosyltransferase activity. In Homo sapiens (Human), this protein is 4-galactosyl-N-acetylglucosaminide 3-alpha-L-fucosyltransferase FUT6.